The following is a 202-amino-acid chain: Ribosome biogenesis regulatory protein homolog (202 aa).

The tract at residues 82–103 (TLPPPTTPLPREKPVPQPKPET) is disordered.

This sequence belongs to the RRS1 family. As to quaternary structure, component of a hexameric 5S RNP precursor complex, composed of 5S RNA, RRS1, RPF2, RPL5, RPL11 and SYO1; this complex acts as a precursor for ribosome assembly.

It is found in the nucleus. Involved in ribosomal large subunit assembly. The chain is Ribosome biogenesis regulatory protein homolog from Chaetomium thermophilum (strain DSM 1495 / CBS 144.50 / IMI 039719) (Thermochaetoides thermophila).